The chain runs to 152 residues: Large-conductance mechanosensitive channel (152 aa).

3 consecutive transmembrane segments (helical) span residues 26–46 (VLDL…VGSA), 50–70 (ILTP…LFIT), and 92–112 (IGVF…IFWL).

It belongs to the MscL family. Homopentamer.

It is found in the cell inner membrane. Channel that opens in response to stretch forces in the membrane lipid bilayer. May participate in the regulation of osmotic pressure changes within the cell. In Gluconobacter oxydans (strain 621H) (Gluconobacter suboxydans), this protein is Large-conductance mechanosensitive channel.